We begin with the raw amino-acid sequence, 204 residues long: uncharacterized protein (204 aa).

The tract at residues 118 to 169 (FPAASERPMPSRRLSKATQNVQTRPSERPAPCHRRPGPRGPGGRDPPEACHP) is disordered.

This is an uncharacterized protein from Encephalitozoon cuniculi (strain GB-M1) (Microsporidian parasite).